A 271-amino-acid polypeptide reads, in one-letter code: Chitinase 6 (271 aa).

The N-terminal stretch at 1 to 20 (MARRLSLLAVVLAMVAAVSA) is a signal peptide. The 36-residue stretch at 25 to 60 (AQSCGCASDQCCSKWGFCGTGSDYCGTGCQAGPCDV) folds into the Chitin-binding type-1 domain. 6 cysteine pairs are disulfide-bonded: cysteine 28–cysteine 36, cysteine 30–cysteine 42, cysteine 35–cysteine 49, cysteine 88–cysteine 137, cysteine 150–cysteine 159, and cysteine 239–cysteine 271. Glutamate 132 acts as the Proton donor in catalysis. A glycan (N-linked (GlcNAc...) asparagine) is linked at asparagine 268.

This sequence belongs to the glycosyl hydrolase 19 family. Chitinase class IV subfamily. Expressed in roots, leaves, sheaths and meristems.

It carries out the reaction Random endo-hydrolysis of N-acetyl-beta-D-glucosaminide (1-&gt;4)-beta-linkages in chitin and chitodextrins.. Functionally, may function in reproductive organs during embryogenesis and seed maturation. This Oryza sativa subsp. japonica (Rice) protein is Chitinase 6 (Cht6).